Reading from the N-terminus, the 250-residue chain is 7-cyano-7-deazaguanine synthase (250 aa).

An ATP-binding site is contributed by 21 to 31 (FSGGQDSSVCL). The Zn(2+) site is built by cysteine 209, cysteine 224, cysteine 227, and cysteine 230.

The protein belongs to the QueC family. It depends on Zn(2+) as a cofactor.

It carries out the reaction 7-carboxy-7-deazaguanine + NH4(+) + ATP = 7-cyano-7-deazaguanine + ADP + phosphate + H2O + H(+). It participates in purine metabolism; 7-cyano-7-deazaguanine biosynthesis. Functionally, catalyzes the ATP-dependent conversion of 7-carboxy-7-deazaguanine (CDG) to 7-cyano-7-deazaguanine (preQ(0)). The sequence is that of 7-cyano-7-deazaguanine synthase from Caulobacter sp. (strain K31).